Reading from the N-terminus, the 321-residue chain is NADPH-dependent codeinone reductase 1-5 (321 aa).

Thr-27 and Asp-51 together coordinate NADPH. Active-site proton donor residues include Tyr-56 and His-119. Residue His-119 coordinates substrate. NADPH is bound by residues Gln-187, Ser-214, Leu-216, Ser-264, and Arg-269.

This sequence belongs to the aldo/keto reductase family. As to expression, latex secreting cells (laticifer cells). Expressed constitutively and ubiquitously with highest levels in capsules.

Its subcellular location is the cytoplasm. The protein resides in the cytosol. The enzyme catalyses codeine + NADP(+) = codeinone + NADPH + H(+). It carries out the reaction neopine + NADP(+) = neopinone + NADPH + H(+). It catalyses the reaction morphine + NADP(+) = morphinone + NADPH + H(+). The catalysed reaction is neomorphine + NADP(+) = neomorphinone + NADPH + H(+). The protein operates within alkaloid biosynthesis; morphine biosynthesis. Functionally, NADPH-dependent codeinone reductase involved in biosynthesis of morphinan-type benzylisoquinoline and opiate alkaloids natural products. Reduces codeinone to codeine in the penultimate step in morphine biosynthesis. Can use morphinone, hydrocodone and hydromorphone as substrate during reductive reaction with NADPH as cofactor, and morphine and dihydrocodeine as substrate during oxidative reaction with NADP as cofactor. Converts morphinone to morphine, and neomorphinone to neomorphine. Reduces irreversibly neopinone, a spontaneous isomer of codeinone, to neopine; in planta, neopine levels are limited to low levels. The chain is NADPH-dependent codeinone reductase 1-5 from Papaver somniferum (Opium poppy).